The chain runs to 1125 residues: Probable inorganic carbon transporter subunit DabA (1125 aa).

4 residues coordinate Zn(2+): Cys578, Asp580, His769, and Cys784. Positions Ser1106 to Ala1125 are disordered.

It belongs to the inorganic carbon transporter (TC 9.A.2) DabA family. As to quaternary structure, forms a complex with DabB. The cofactor is Zn(2+).

It localises to the cell inner membrane. Functionally, part of an energy-coupled inorganic carbon pump. The sequence is that of Probable inorganic carbon transporter subunit DabA from Nitrosococcus oceani (strain ATCC 19707 / BCRC 17464 / JCM 30415 / NCIMB 11848 / C-107).